Reading from the N-terminus, the 245-residue chain is Geranylgeranylglyceryl phosphate synthase (245 aa).

Positions 22 and 51 each coordinate Mg(2+). Residues 169–175 (YLEAGSG), 200–201 (GG), and 222–223 (GT) contribute to the sn-glycerol 1-phosphate site.

Belongs to the GGGP/HepGP synthase family. Group II subfamily. In terms of assembly, homopentamer. It depends on Mg(2+) as a cofactor.

Its subcellular location is the cytoplasm. The catalysed reaction is sn-glycerol 1-phosphate + (2E,6E,10E)-geranylgeranyl diphosphate = sn-3-O-(geranylgeranyl)glycerol 1-phosphate + diphosphate. The protein operates within membrane lipid metabolism; glycerophospholipid metabolism. Its activity is regulated as follows. Inhibited by EDTA in vitro. Functionally, prenyltransferase that catalyzes the transfer of the geranylgeranyl moiety of geranylgeranyl diphosphate (GGPP) to the C3 hydroxyl of sn-glycerol-1-phosphate (G1P). This reaction is the first ether-bond-formation step in the biosynthesis of archaeal membrane lipids. Cannot use sn-glycerol-3-phosphate (G3P) or dihydroxyacetonephosphate (DHAP) as substrate. In Methanothermobacter marburgensis (strain ATCC BAA-927 / DSM 2133 / JCM 14651 / NBRC 100331 / OCM 82 / Marburg) (Methanobacterium thermoautotrophicum), this protein is Geranylgeranylglyceryl phosphate synthase.